The primary structure comprises 900 residues: Alanine--tRNA ligase (900 aa).

4 residues coordinate Zn(2+): His580, His584, Cys683, and His687.

It belongs to the class-II aminoacyl-tRNA synthetase family. Zn(2+) serves as cofactor.

Its subcellular location is the cytoplasm. The catalysed reaction is tRNA(Ala) + L-alanine + ATP = L-alanyl-tRNA(Ala) + AMP + diphosphate. In terms of biological role, catalyzes the attachment of alanine to tRNA(Ala) in a two-step reaction: alanine is first activated by ATP to form Ala-AMP and then transferred to the acceptor end of tRNA(Ala). Also edits incorrectly charged Ser-tRNA(Ala) and Gly-tRNA(Ala) via its editing domain. In Mycolicibacterium paratuberculosis (strain ATCC BAA-968 / K-10) (Mycobacterium paratuberculosis), this protein is Alanine--tRNA ligase.